A 556-amino-acid chain; its full sequence is MNSLEQVKGLIKEEIQAAVLKAELATEEQIPNVVLESPKDKTNGDFSTNMAMQLARVAKKAPRMIAEELVANFDKAKASTEKIEIAGPGFINFYMDNSYLTDLIPTIVNAGEAYGETNTGKGEKVQVEFVSANPTGDLHLGHARGAAVGDTLCNLLAKAGYDVSREYYINDAGNQIHNLALSVEARYMQALGLEKEMPEDGYHGADIIGIGKRLAEEFGDRYAKADEKESYEFYREYGLKYELAKLQKDLESFRVKFDVWFSETSLYKNGKIDQALAVLKERDEIFEEDGATWFRSMTYGDDKNRVLIKNDGSYTYLTPDIAYHRDKLERGFDKLINIWGADHHGYIPRMKAAIQALGYDKETLEVEIIQMVQLYQNGEKMKMSKRTGKAVTLRELMEEVGVDAMRYFFAMRSGDSHLDFDMDLAVSKSNENPVYYAQYAHARVCSILRQGEELGLATGGDVNYKLVTSEKEVELLKKLGEFPAVVADAAQKRLPHRITNYAFELAATLHSFYNAEKVLNQDNLELSKARYELMKAVRTTLQNALAIVGVSAPEKM.

The 'HIGH' region motif lies at 132 to 142; the sequence is ANPTGDLHLGH.

The protein belongs to the class-I aminoacyl-tRNA synthetase family. As to quaternary structure, monomer.

The protein localises to the cytoplasm. The enzyme catalyses tRNA(Arg) + L-arginine + ATP = L-arginyl-tRNA(Arg) + AMP + diphosphate. This chain is Arginine--tRNA ligase 1, found in Bacillus anthracis.